The sequence spans 223 residues: Putative 3-methyladenine DNA glycosylase (223 aa).

Belongs to the DNA glycosylase MPG family.

The protein is Putative 3-methyladenine DNA glycosylase of Pseudomonas syringae pv. tomato (strain ATCC BAA-871 / DC3000).